The following is a 209-amino-acid chain: Mitochondrial import inner membrane translocase subunit Tim23 (209 aa).

Transmembrane regions (helical) follow at residues 73–93 (FELAFFTIGGCCMSGAAFGAV), 125–145 (ALWANTLGSLALLYSAFGVII), and 180–200 (GGLAGLALTSAFALYNNWEHI).

It belongs to the Tim17/Tim22/Tim23 family. Component of the TIM23 complex at least composed of timm23, timm17 and timm50. The complex interacts with the timm44 component of the PAM complex.

The protein localises to the mitochondrion inner membrane. Essential component of the TIM23 complex, a complex that mediates the translocation of transit peptide-containing proteins across the mitochondrial inner membrane. The protein is Mitochondrial import inner membrane translocase subunit Tim23 (timm23) of Xenopus tropicalis (Western clawed frog).